The chain runs to 357 residues: Actin, macronuclear (357 aa).

The protein belongs to the actin family. Met-1 may be removed after translation.

Its subcellular location is the cytoplasm. It is found in the cytoskeleton. The catalysed reaction is ATP + H2O = ADP + phosphate + H(+). Actins are highly conserved proteins that are involved in various types of cell motility and are ubiquitously expressed in all eukaryotic cells. This is Actin, macronuclear from Oxytricha fallax.